The primary structure comprises 547 residues: MAAKEVKFGREARERLLRGVDILANAVKVTLGPKGRNVVIDKSFGAPRITKDGVSVAKEIELEDKFENMGAQMLREVASKTNDIAGDGTTTATVLGQAIVQEGVKAVAAGMNPMDLKRGIDAAVDEVVANLFKKAKKIQTSAEIAQVGTISANGAAEIGKMIADAMEKVGNEGVITVEEAKTAETELEVVEGMQFDRGYLSPYFVTNAEKMVADLDDPYILIHEKKLSNLQSLLPVLEAVVQSGKPLLIIAEDVEGEALATLVVNKLRGGLKIAAVKAPGFGDRRKAMLEDIAILTSGQVISEDVGIKLENVTLDMLGRAKKVNISKENTTIIDGAGQKSEINARVNQIKVQIEETTSDYDREKLQERLAKLAGGVAVIRVGGATEVEVKEKKDRVDDALNATRAAVEEGIVAGGGTALLRAANALTVKGSNPDQEAGINIVRRALQAPARQIATNAGEEAAIIVGKVLENNADTFGYNTATGEFGDLIALGIVDPVKVVRSALQNAASIASLLITTEAMVAEVPKKDTPVPPMPGGGMGGMGGMDF.

Residues 30–33 (TLGP), Lys51, 87–91 (DGTTT), Gly415, and Asp495 each bind ATP. Residues 526-547 (KKDTPVPPMPGGGMGGMGGMDF) form a disordered region. The span at 536–547 (GGGMGGMGGMDF) shows a compositional bias: gly residues.

The protein belongs to the chaperonin (HSP60) family. Forms a cylinder of 14 subunits composed of two heptameric rings stacked back-to-back. Interacts with the co-chaperonin GroES.

It localises to the cytoplasm. The catalysed reaction is ATP + H2O + a folded polypeptide = ADP + phosphate + an unfolded polypeptide.. In terms of biological role, together with its co-chaperonin GroES, plays an essential role in assisting protein folding. The GroEL-GroES system forms a nano-cage that allows encapsulation of the non-native substrate proteins and provides a physical environment optimized to promote and accelerate protein folding. This is Chaperonin GroEL from Bartonella henselae (strain ATCC 49882 / DSM 28221 / CCUG 30454 / Houston 1) (Rochalimaea henselae).